The sequence spans 142 residues: Endoribonuclease YbeY (142 aa).

Positions 107, 111, and 117 each coordinate Zn(2+).

The protein belongs to the endoribonuclease YbeY family. Zn(2+) serves as cofactor.

The protein localises to the cytoplasm. Its function is as follows. Single strand-specific metallo-endoribonuclease involved in late-stage 70S ribosome quality control and in maturation of the 3' terminus of the 16S rRNA. The polypeptide is Endoribonuclease YbeY (Parabacteroides distasonis (strain ATCC 8503 / DSM 20701 / CIP 104284 / JCM 5825 / NCTC 11152)).